A 161-amino-acid chain; its full sequence is Regulator of ribonuclease activity A (161 aa).

The protein belongs to the RraA family. Homotrimer. Binds to both RNA-binding sites in the C-terminal region of Rne and to RhlB.

The protein resides in the cytoplasm. Globally modulates RNA abundance by binding to RNase E (Rne) and regulating its endonucleolytic activity. Can modulate Rne action in a substrate-dependent manner by altering the composition of the degradosome. Modulates RNA-binding and helicase activities of the degradosome. The sequence is that of Regulator of ribonuclease activity A from Escherichia fergusonii (strain ATCC 35469 / DSM 13698 / CCUG 18766 / IAM 14443 / JCM 21226 / LMG 7866 / NBRC 102419 / NCTC 12128 / CDC 0568-73).